The chain runs to 273 residues: Dermonecrotic toxin LapSicTox-alphaIB1b3 (273 aa).

His-5 is a catalytic residue. The Mg(2+) site is built by Glu-25 and Asp-27. His-41 (nucleophile) is an active-site residue. Disulfide bonds link Cys-45-Cys-51 and Cys-47-Cys-190. Residue Asp-85 coordinates Mg(2+). N-linked (GlcNAc...) asparagine glycosylation is present at Asn-250.

This sequence belongs to the arthropod phospholipase D family. Class II subfamily. The cofactor is Mg(2+). Expressed by the venom gland.

Its subcellular location is the secreted. It carries out the reaction an N-(acyl)-sphingosylphosphocholine = an N-(acyl)-sphingosyl-1,3-cyclic phosphate + choline. The catalysed reaction is an N-(acyl)-sphingosylphosphoethanolamine = an N-(acyl)-sphingosyl-1,3-cyclic phosphate + ethanolamine. The enzyme catalyses a 1-acyl-sn-glycero-3-phosphocholine = a 1-acyl-sn-glycero-2,3-cyclic phosphate + choline. It catalyses the reaction a 1-acyl-sn-glycero-3-phosphoethanolamine = a 1-acyl-sn-glycero-2,3-cyclic phosphate + ethanolamine. Functionally, dermonecrotic toxins cleave the phosphodiester linkage between the phosphate and headgroup of certain phospholipids (sphingolipid and lysolipid substrates), forming an alcohol (often choline) and a cyclic phosphate. This toxin acts on sphingomyelin (SM). It may also act on ceramide phosphoethanolamine (CPE), lysophosphatidylcholine (LPC) and lysophosphatidylethanolamine (LPE), but not on lysophosphatidylserine (LPS), and lysophosphatidylglycerol (LPG). It acts by transphosphatidylation, releasing exclusively cyclic phosphate products as second products. Induces dermonecrosis, hemolysis, increased vascular permeability, edema, inflammatory response, and platelet aggregation. The chain is Dermonecrotic toxin LapSicTox-alphaIB1b3 from Loxosceles apachea (Apache recluse spider).